Reading from the N-terminus, the 398-residue chain is Inner membrane protein YjgN (398 aa).

Over 1–24 (MAQVINEMDVPSHSFVFHGTGERY) the chain is Cytoplasmic. Residues 25–45 (FLICVVNVLLTIITLGIYLPW) form a helical membrane-spanning segment. The Periplasmic segment spans residues 46–73 (ALMKCKRYLYANMEVNGQRFSYGITGGN). Residues 74 to 94 (VFFSCLVFVFFYFAILMTVSA) form a helical membrane-spanning segment. A topological domain (cytoplasmic) is located at residue Asp-95. A helical transmembrane segment spans residues 96–116 (MPLIGCVLTLSLLVLLIFMAA). Residues 117–142 (KGLRYQALMTSLNGVRFSFNCSMKGV) lie on the Periplasmic side of the membrane. The helical transmembrane segment at 143 to 163 (WWVTFFLPILMAIGMGTVFFI) threads the bilayer. Topologically, residues 164–175 (STKMLHANSSSS) are cytoplasmic. A helical membrane pass occupies residues 176–196 (VIVSVVLMAIVGIVSIGIFNG). Topologically, residues 197–228 (TLYSLVMSFLWSNTSFGIHRFKVKLDTAYCIK) are periplasmic. Residues 229–249 (YAILAFLALLPFLAVAGYIIF) traverse the membrane as a helical segment. Topologically, residues 250–278 (DQILNAYDSSVYANDDIENLQQFMEMQRK) are cytoplasmic. A helical membrane pass occupies residues 279 to 299 (MIIAQLIYYFGIAVSTSYLTV). Over 300–333 (SLRNHFMSNLSLNDGRIRFRSTLTYHGMLYRMCA) the chain is Periplasmic. The helical transmembrane segment at 334–354 (LVVISGITGGLAYPLLKIWMI) threads the bilayer. At 355–398 (DWQAKNTYLLGDLDDLPLINKEEQPDKGFLASISRGIMPSLPFL) the chain is on the cytoplasmic side.

It is found in the cell inner membrane. This is Inner membrane protein YjgN (yjgN) from Escherichia coli O157:H7.